We begin with the raw amino-acid sequence, 238 residues long: ATP synthase subunit a (238 aa).

A run of 5 helical transmembrane segments spans residues 18–38 (LTLLAVCIVTILLIFGFVFWA), 76–96 (YSLLLFTIFLFVAVANNLGLF), 114–134 (NLAFDLALSLFVTLLVHIEGI), 166–186 (SLAIRLFGNIFAGEVVTGLIV), and 193–213 (LYWWPIAFLVNIAWTAFSIFI).

The protein belongs to the ATPase A chain family. In terms of assembly, F-type ATPases have 2 components, CF(1) - the catalytic core - and CF(0) - the membrane proton channel. CF(1) has five subunits: alpha(3), beta(3), gamma(1), delta(1), epsilon(1). CF(0) has three main subunits: a(1), b(2) and c(9-12). The alpha and beta chains form an alternating ring which encloses part of the gamma chain. CF(1) is attached to CF(0) by a central stalk formed by the gamma and epsilon chains, while a peripheral stalk is formed by the delta and b chains.

It localises to the cell membrane. Functionally, key component of the proton channel; it plays a direct role in the translocation of protons across the membrane. This is ATP synthase subunit a from Streptococcus equi subsp. zooepidemicus (strain H70).